Reading from the N-terminus, the 800-residue chain is MRKKRYVWLKSILVAILVFGSGVWINTSNGTNAQAATITQDTPINQIFTDAALAEKMKTVLGKTNVTDTVSQTDLDQVTTLQADRLGIKSIDGLEYLNNLTQINFSNNQLTDITPLKDLTKLVDILMNNNQIADITPLANLTNLTGLTLFNNQITDIDPLKNLTNLNRLELSSNTISDISALSGLTNLQQLSFGNQVTDLKPLANLTTLERLDISSNKVSDISVLAKLTNLESLIATNNQISDITPLGILTNLDELSLNGNQLKDIGTLASLTNLTDLDLANNQISNLAPLSGLTKLTELKLGANQISNISPLAGLTALTNLELNENQLEDISPISNLKNLTYLTLYFNNISDISPVSSLTKLQRLFFYNNKVSDVSSLANLTNINWLSAGHNQISDLTPLANLTRITQLGLNDQAWTNAPVNYKANVSIPNTVKNVTGALIAPATISDGGSYAEPDITWNLPSYTNEVSYTFSQPVTIGKGTTTFSGTVTQPLKAIFNAKFHVDGKETTKEVEAGNLLTEPAKPVKEGHTFVGWFDAQTGGTKWNFSTDKMPTNDINLYAQFSINSYTATFENDGVTTSQTVDYQGLLQEPTPPTKEGYTFKGWYDAKTGGDKWDFATSKMPAKNITLYAQYSANSYTATFDVDGKSTTQAVDYQGLLKEPKAPTKAGYTFKGWYDEKTDGKKWDFATDKMPANDITLYAQFTKNPVAPPTTGGNTPPTTNNGGNTTPPSANIPGSDTSNTSTGNSASTTSTMNAYDPYNSKEASLPTTGDSDNALYLLLGLLAVGTAMALTKKARASK.

The first 35 residues, 1 to 35, serve as a signal peptide directing secretion; that stretch reads MRKKRYVWLKSILVAILVFGSGVWINTSNGTNAQA. Residues 36–76 enclose the LRRNT domain; sequence ATITQDTPINQIFTDAALAEKMKTVLGKTNVTDTVSQTDLD. LRR repeat units lie at residues 77–98, 99–120, 121–142, 143–164, 165–186, 187–207, 208–229, 230–251, 252–273, 274–295, 296–317, 318–339, 340–361, 362–383, and 384–405; these read QVTT…EYLN, NLTQ…KDLT, KLVD…ANLT, NLTG…KNLT, NLNR…SGLT, NLQQ…ANLT, TLER…AKLT, NLES…GILT, NLDE…ASLT, NLTD…SGLT, KLTE…AGLT, ALTN…SNLK, NLTY…SSLT, KLQR…ANLT, and NINW…ANLT. The region spanning 416 to 505 is the LRRCT domain; the sequence is AWTNAPVNYK…AIFNAKFHVD (90 aa). Residues 518–587 form a B-1 repeat; the sequence is LLTEPAKPVK…TTSQTVDYQG (70 aa). The segment at 518–706 is 3 X approximate tandem repeats, type B; sequence LLTEPAKPVK…ITLYAQFTKN (189 aa). The stretch at 588-657 is one B-2 repeat; the sequence is LLQEPTPPTK…STTQAVDYQG (70 aa). Residues 658–706 form a B-3 repeat; it reads LLKEPKAPTKAGYTFKGWYDEKTDGKKWDFATDKMPANDITLYAQFTKN. The disordered stretch occupies residues 705–757; the sequence is KNPVAPPTTGGNTPPTTNNGGNTTPPSANIPGSDTSNTSTGNSASTTSTMNAY. Positions 711-753 are enriched in low complexity; the sequence is PTTGGNTPPTTNNGGNTTPPSANIPGSDTSNTSTGNSASTTST. An LPXTG sorting signal motif is present at residues 767-771; the sequence is LPTTG. T770 bears the Pentaglycyl murein peptidoglycan amidated threonine mark. A propeptide spans 771–800 (removed by sortase A); the sequence is GDSDNALYLLLGLLAVGTAMALTKKARASK.

Belongs to the internalin family.

The protein localises to the secreted. It localises to the cell wall. Mediates the entry of Listeria monocytogenes into cells. Binds to host receptor cadherin-1 (E-cadherin, CDH1). The sequence is that of Internalin A (inlA) from Listeria monocytogenes serotype 1/2a (strain 10403S).